A 623-amino-acid polypeptide reads, in one-letter code: MATENGAVELEIPSSSTDTAPKAAAGEGPPAAEKDPGPPDPQKDPGPPDPEKDAGPPNPEKELESPDPKKEPDPDSTKDTEAPAPEKGDGASAQPSASSQGPEGEGGLQGEPAEGSAGQPAALPQETATAEASVKKPEAEQGTPGSQDPGEAKEQKKVAEGQAPSKKGSPAFLHSPSCPAAISSLEKPLAEKPLDETLELIFEGVPVTPGPTETEPAKVAEGEKNLPGGSQKEGEEKAAGHAGQDGVQGDTSRGIEFQAVPSERSEVGQALSPTAKEEDCFQILDDCPPPPAPFPHRIVELRPGNINSQFSLNSKEALGGGKFGAVCTCTEKATGLKLAAKVIKKQTPKDKEMVLLEIEVMNQLNHRNLIQLYAAIETPHEIVLFMEYIEGGELFERIVDEDYQLTEVDTMVFVRQICDGILFMHKMRVLHLDLKPENILCVNTTGHLVKIIDFGLARRYNPNEKLKVNFGTPEFLSPEVVNYDQISDKTDMWSLGVITYMLLSGLSPFLGDDDTETLNNVLSSNWYFDEETFEAVSDEAKDFVSNLIVKDQRARMSAAQCLAHPWLNNLAEKAKRCNRRLKSQILLKKYLMKRRWKKNFIAVSAANRFKKISSSGALMALGV.

2 disordered regions span residues Met1–Pro179 and Gly204–Thr251. Ala2 is subject to N-acetylalanine. Residues Ala20–Ala31 show a composition bias toward low complexity. 2 stretches are compositionally biased toward basic and acidic residues: residues Ala32 to Lys43 and Asp49 to Asp89. Over residues Gly90–Pro102 the composition is skewed to low complexity. Residues Gly150–Ala159 are compositionally biased toward basic and acidic residues. 3 positions are modified to phosphoserine: Ser169, Ser175, and Ser177. Low complexity predominate over residues Gly204–Thr214. The span at Glu215–Lys224 shows a compositional bias: basic and acidic residues. In terms of domain architecture, Protein kinase spans Leu312–Leu567. ATP-binding positions include Leu318 to Val326 and Lys341. Catalysis depends on Asp433, which acts as the Proton acceptor. Residue Thr472 is modified to Phosphothreonine. The tract at residues Ile601–Ser613 is calmodulin-binding.

This sequence belongs to the protein kinase superfamily. CAMK Ser/Thr protein kinase family. As to quaternary structure, may interact with centrin.

The protein localises to the cytoplasm. It catalyses the reaction L-seryl-[myosin light chain] + ATP = O-phospho-L-seryl-[myosin light chain] + ADP + H(+). The catalysed reaction is L-threonyl-[myosin light chain] + ATP = O-phospho-L-threonyl-[myosin light chain] + ADP + H(+). In terms of biological role, implicated in the level of global muscle contraction and cardiac function. Phosphorylates a specific serine in the N-terminus of a myosin light chain. This chain is Myosin light chain kinase 2, skeletal/cardiac muscle (MYLK2), found in Bos taurus (Bovine).